Reading from the N-terminus, the 346-residue chain is MSAITGRVSTYHREKFPEWKVKLVNEVKEKLKENDVVLVLDLVETPANLVHKFRKKFRKELPYMKVIKNNLVRKAFEQSGIEMPKEMDEQLVGSNMFIFTNDNPFKLALKISKFSMPAPAKPGDVAQSEIVVPAGDTGLTPGPILSTFGKLKIKTMVKGGTIHIAKDTVVAKPGDVISPELASLLQKLGITPMELKMKIKGAYIKSLNRWVPAEELVLDLNKYKEQIQEAYTNALALGVSIAYPVPEVLKLSVAKAFQDALKVAVEAGWLTKETAPYLLSKAYAQALALVGALGDKAKELGIEVEVPAAPAPEAKEEKKEEAEEEEEEKKEVSEEDLSAGLGALFG.

The interval 305-346 (EVPAAPAPEAKEEKKEEAEEEEEEKKEVSEEDLSAGLGALFG) is disordered. A compositionally biased stretch (acidic residues) spans 322–337 (AEEEEEEKKEVSEEDL).

This sequence belongs to the universal ribosomal protein uL10 family. In terms of assembly, part of the 50S ribosomal subunit. Forms part of the ribosomal stalk which helps the ribosome interact with GTP-bound translation factors. Forms a heptameric L10(L12)2(L12)2(L12)2 complex, where L10 forms an elongated spine to which the L12 dimers bind in a sequential fashion.

Forms part of the ribosomal stalk, playing a central role in the interaction of the ribosome with GTP-bound translation factors. In Ignicoccus hospitalis (strain KIN4/I / DSM 18386 / JCM 14125), this protein is Large ribosomal subunit protein uL10.